The following is a 31-amino-acid chain: Antifungal protein 1 (31 aa).

It localises to the secreted. Its function is as follows. Antifungal activity against C.albicans ATCC 76615. The polypeptide is Antifungal protein 1 (Musca domestica (House fly)).